Here is a 124-residue protein sequence, read N- to C-terminus: Translation initiation factor 5A (124 aa).

The segment at 27 to 53 is disordered; sequence TSYSTSKPGKHGSAKARVEGTGVFDGQ. A Hypusine modification is found at Lys36.

This sequence belongs to the eIF-5A family.

The protein localises to the cytoplasm. Its function is as follows. Functions by promoting the formation of the first peptide bond. This chain is Translation initiation factor 5A, found in Natronomonas pharaonis (strain ATCC 35678 / DSM 2160 / CIP 103997 / JCM 8858 / NBRC 14720 / NCIMB 2260 / Gabara) (Halobacterium pharaonis).